A 237-amino-acid polypeptide reads, in one-letter code: Protein FEV (237 aa).

The ETS DNA-binding region spans 47–127; it reads IQLWQFLLEL…HGKRYAYRFD (81 aa). Positions 129–237 are may mediate active transcriptional repression; sequence QGLAQACQPP…AASHLGGHYH (109 aa).

The protein belongs to the ETS family. In terms of tissue distribution, expressed in central serotonergic neurons.

The protein localises to the nucleus. Functionally, functions as a transcriptional regulator. May function as a transcriptional repressor. Functions in the differentiation and the maintenance of the central serotonergic neurons. May play a role in cell growth. This Mus musculus (Mouse) protein is Protein FEV (Fev).